A 234-amino-acid polypeptide reads, in one-letter code: DEAD-box ATP-dependent RNA helicase 3 (234 aa).

The short motif at 120–148 (LAVSRLGLPQKLVETLEKRGITKLFPIQR) is the Q motif element. In terms of domain architecture, Helicase ATP-binding spans 151-234 (LVPALEGRDI…RTVCVYGGVS (84 aa)). 164-171 (AKTGTGKT) provides a ligand contact to ATP.

It belongs to the DEAD box helicase family. DDX21/DDX50 subfamily.

This is DEAD-box ATP-dependent RNA helicase 3 from Helianthus annuus (Common sunflower).